The primary structure comprises 421 residues: MQTQILERMESDVRTYSRSFPVVFTKARNARLTDEEGREYIDFLAGAGTLNYGHNNPHLKQALLDYIDSDGIVHGLDFWTAAKRDYLETLEEVILKPRGLDYKVHLPGPTGTNAVEAAIRLARVAKGRHNIVSFTNGFHGVTMGALATTGNRKFREATGGVPTQAASFMPFDGYLGSSTDTLDYFEKLLGDKSGGLDVPAAVIVETVQGEGGINVAGLEWLKRLESICRANDILLIIDDIQAGCGRTGKFFSFEHAGITPDIVTNSKSLSGYGLPFAHVLMRPELDKWKPGQYNGTFRGFNLAFATAAAAMRKYWSDDTFERDVQRKARIVEERFGKIAAWLSENGIEASERGRGLMRGIDVGSGDIADKITHQAFENGLIIETSGQDGEVVKCLCPLTIPDEDLVEGLDILETSTKQAFS.

At lysine 267 the chain carries N6-(pyridoxal phosphate)lysine.

It belongs to the class-III pyridoxal-phosphate-dependent aminotransferase family. Homohexamer. Pyridoxal 5'-phosphate serves as cofactor.

It carries out the reaction L-2,4-diaminobutanoate + 2-oxoglutarate = L-aspartate 4-semialdehyde + L-glutamate. It functions in the pathway amine and polyamine biosynthesis; ectoine biosynthesis; L-ectoine from L-aspartate 4-semialdehyde: step 1/3. Its function is as follows. Catalyzes reversively the conversion of L-aspartate beta-semialdehyde (ASA) to L-2,4-diaminobutyrate (DABA) by transamination with L-glutamate. Seems to use L-glutamate specifically as the amino group donor to ASA, as it is not active with L-alanine, L-glutamine, L-aspartate and L-lysine, and is only poorly active with L-homoserine. In the reverse reaction, gamma-aminobutyric acid (GABA) and L-ornithine can also be used as amino group donors to 2-oxoglutarate, but with a reduced activity compared to that with DABA. The chain is Diaminobutyrate--2-oxoglutarate transaminase (ectB) from Halomonas elongata (strain ATCC 33173 / DSM 2581 / NBRC 15536 / NCIMB 2198 / 1H9).